The primary structure comprises 105 residues: Co-chaperonin GroES 3 (105 aa).

This sequence belongs to the GroES chaperonin family. In terms of assembly, heptamer of 7 subunits arranged in a ring. Interacts with the chaperonin GroEL.

The protein localises to the cytoplasm. Functionally, together with the chaperonin GroEL, plays an essential role in assisting protein folding. The GroEL-GroES system forms a nano-cage that allows encapsulation of the non-native substrate proteins and provides a physical environment optimized to promote and accelerate protein folding. GroES binds to the apical surface of the GroEL ring, thereby capping the opening of the GroEL channel. This Rhizobium meliloti (strain 1021) (Ensifer meliloti) protein is Co-chaperonin GroES 3.